Reading from the N-terminus, the 101-residue chain is Small ribosomal subunit protein uS14 (101 aa).

It belongs to the universal ribosomal protein uS14 family. As to quaternary structure, part of the 30S ribosomal subunit. Contacts proteins S3 and S10.

Its function is as follows. Binds 16S rRNA, required for the assembly of 30S particles and may also be responsible for determining the conformation of the 16S rRNA at the A site. This chain is Small ribosomal subunit protein uS14, found in Burkholderia multivorans (strain ATCC 17616 / 249).